The chain runs to 150 residues: Transcriptional regulator MraZ (150 aa).

SpoVT-AbrB domains follow at residues 5-52 (VTHL…PLPD) and 81-124 (AHDL…DAEA).

It belongs to the MraZ family. Forms oligomers.

Its subcellular location is the cytoplasm. The protein localises to the nucleoid. The protein is Transcriptional regulator MraZ of Alkalilimnicola ehrlichii (strain ATCC BAA-1101 / DSM 17681 / MLHE-1).